The following is a 433-amino-acid chain: uncharacterized protein (433 aa).

Positions 1–26 (MTRRAEFEMGLFVILQSMFLISLCSS) are cleaved as a signal peptide. Residues Asn-59, Asn-72, Asn-125, Asn-159, Asn-210, Asn-275, Asn-282, and Asn-323 are each glycosylated (N-linked (GlcNAc...) asparagine). The GPI-anchor amidated alanine moiety is linked to residue Ala-405. Residues 406–433 (SSQPRLHDEGVTRLVIFVLSMLLVMLLS) constitute a propeptide, removed in mature form.

It localises to the cell membrane. This is an uncharacterized protein from Arabidopsis thaliana (Mouse-ear cress).